A 435-amino-acid chain; its full sequence is Adenylosuccinate synthetase (435 aa).

Residues 17–23 (GDEGKGK) and 45–47 (GHT) contribute to the GTP site. The active-site Proton acceptor is aspartate 18. Mg(2+) is bound by residues aspartate 18 and glycine 45. IMP-binding positions include 18-21 (DEGK), 43-46 (NAGH), threonine 134, arginine 148, glutamine 229, threonine 244, and arginine 308. The active-site Proton donor is histidine 46. 304–310 (SVTGRPR) contributes to the substrate binding site. GTP-binding positions include arginine 310, 336–338 (KLD), and 418–420 (STG).

It belongs to the adenylosuccinate synthetase family. As to quaternary structure, homodimer. Mg(2+) is required as a cofactor.

It is found in the cytoplasm. The enzyme catalyses IMP + L-aspartate + GTP = N(6)-(1,2-dicarboxyethyl)-AMP + GDP + phosphate + 2 H(+). It participates in purine metabolism; AMP biosynthesis via de novo pathway; AMP from IMP: step 1/2. Its function is as follows. Plays an important role in the de novo pathway of purine nucleotide biosynthesis. Catalyzes the first committed step in the biosynthesis of AMP from IMP. This is Adenylosuccinate synthetase from Bordetella parapertussis (strain 12822 / ATCC BAA-587 / NCTC 13253).